Reading from the N-terminus, the 470-residue chain is Na(+)-translocating NADH-quinone reductase subunit A (470 aa).

Belongs to the NqrA family. Composed of six subunits; NqrA, NqrB, NqrC, NqrD, NqrE and NqrF.

It carries out the reaction a ubiquinone + n Na(+)(in) + NADH + H(+) = a ubiquinol + n Na(+)(out) + NAD(+). Its function is as follows. NQR complex catalyzes the reduction of ubiquinone-1 to ubiquinol by two successive reactions, coupled with the transport of Na(+) ions from the cytoplasm to the periplasm. NqrA to NqrE are probably involved in the second step, the conversion of ubisemiquinone to ubiquinol. The chain is Na(+)-translocating NADH-quinone reductase subunit A from Chlamydia caviae (strain ATCC VR-813 / DSM 19441 / 03DC25 / GPIC) (Chlamydophila caviae).